The sequence spans 307 residues: Taste receptor type 2 member 10 (307 aa).

Over Met1–Glu6 the chain is Extracellular. A helical transmembrane segment spans residues Gly7 to Ile27. The Cytoplasmic portion of the chain corresponds to Gly28 to Thr42. The chain crosses the membrane as a helical span at residues Ile43–Thr63. The Extracellular segment spans residues Asp64 to Thr100. A glycan (N-linked (GlcNAc...) asparagine) is linked at Asn92. The helical transmembrane segment at Ser101–Leu121 threads the bilayer. Residues Lys122–Asn126 lie on the Cytoplasmic side of the membrane. The helical transmembrane segment at Met127–Ile147 threads the bilayer. Topologically, residues Ala148–Asn179 are extracellular. Asn158 is a glycosylation site (N-linked (GlcNAc...) asparagine). The helical transmembrane segment at Leu180–Leu200 threads the bilayer. The Cytoplasmic segment spans residues Trp201–Lys227. The helical transmembrane segment at Val228–Ser248 threads the bilayer. Residues Cys249–Leu257 lie on the Extracellular side of the membrane. Residues Leu258–Ile278 traverse the membrane as a helical segment. Residues Leu279–Thr307 lie on the Cytoplasmic side of the membrane.

This sequence belongs to the G-protein coupled receptor T2R family. In terms of tissue distribution, expressed in subsets of taste receptor cells of the tongue and palate epithelium and exclusively in gustducin-positive cells.

It is found in the membrane. In terms of biological role, gustducin-coupled strychnine receptor implicated in the perception of bitter compounds in the oral cavity and the gastrointestinal tract. Signals through PLCB2 and the calcium-regulated cation channel TRPM5. The sequence is that of Taste receptor type 2 member 10 (TAS2R10) from Homo sapiens (Human).